We begin with the raw amino-acid sequence, 244 residues long: 3-deoxy-manno-octulosonate cytidylyltransferase (244 aa).

It belongs to the KdsB family.

It localises to the cytoplasm. It catalyses the reaction 3-deoxy-alpha-D-manno-oct-2-ulosonate + CTP = CMP-3-deoxy-beta-D-manno-octulosonate + diphosphate. It functions in the pathway nucleotide-sugar biosynthesis; CMP-3-deoxy-D-manno-octulosonate biosynthesis; CMP-3-deoxy-D-manno-octulosonate from 3-deoxy-D-manno-octulosonate and CTP: step 1/1. Its pathway is bacterial outer membrane biogenesis; lipopolysaccharide biosynthesis. Its function is as follows. Activates KDO (a required 8-carbon sugar) for incorporation into bacterial lipopolysaccharide in Gram-negative bacteria. The sequence is that of 3-deoxy-manno-octulosonate cytidylyltransferase from Synechococcus elongatus (strain ATCC 33912 / PCC 7942 / FACHB-805) (Anacystis nidulans R2).